The chain runs to 136 residues: uncharacterized protein (136 aa).

The N-terminal stretch at 1–19 (MMTAAKRLGLYSALRACSA) is a signal peptide. The chain crosses the membrane as a helical span at residues 75 to 97 (FWFSHTCLVFGSNTILFASLNSF).

The protein resides in the membrane. This is an uncharacterized protein from Saccharomyces cerevisiae (strain ATCC 204508 / S288c) (Baker's yeast).